The sequence spans 350 residues: MEQNSAWFMEAKPVAIWLFLCSVMVILMVGIGGFTRLSKAGLSITEWKPITGTLPPLSEQDWLQEKLKYEATPEYKALNYGISMEEFRAIYLIEYVHRLVARLTGLVFVLPFIYFTLRRKISKKVVIKLFVALLFGALQAFAGWYMVKSGLVAKPHVSHYRLALHLLLALIIFALFSYQFFDYQIRPKQTKLKISCNTKYYVGIILVLIMIQIIFGAFVAGLNAGLIYNTFPLMDGQIVPEDLFFLQPTWLNIFENRATVQFIHRALALLILTLVVILTVKNASIKPVYIMLLSVIIQIILGVITLLLHIPIAIAIAHQVFSFILFGSSLYFLCYLRKQTTSPICTFFPS.

8 consecutive transmembrane segments (helical) span residues 14-34 (VAIW…IGGF), 95-115 (YVHR…FIYF), 125-145 (VVIK…AGWY), 162-182 (LALH…QFFD), 202-222 (VGII…VAGL), 260-280 (VQFI…ILTV), 296-316 (IIQI…AIAI), and 317-337 (AHQV…CYLR). Position 264 (histidine 264) interacts with heme. Heme is bound at residue histidine 318.

It belongs to the COX15/CtaA family. Type 2 subfamily. As to quaternary structure, interacts with CtaB. Heme b serves as cofactor.

It localises to the cell membrane. The enzyme catalyses Fe(II)-heme o + 2 A + H2O = Fe(II)-heme a + 2 AH2. It participates in porphyrin-containing compound metabolism; heme A biosynthesis; heme A from heme O: step 1/1. In terms of biological role, catalyzes the conversion of heme O to heme A by two successive hydroxylations of the methyl group at C8. The first hydroxylation forms heme I, the second hydroxylation results in an unstable dihydroxymethyl group, which spontaneously dehydrates, resulting in the formyl group of heme A. The polypeptide is Heme A synthase (Wolbachia pipientis wMel).